A 196-amino-acid polypeptide reads, in one-letter code: Pro-FMRFamide-related neuropeptide VF (196 aa).

Residues 1–26 form the signal peptide; that stretch reads MEIISSKLFILLTLATSSLLTSNIFC. Positions 27–55 are excised as a propeptide; sequence ADELVMSNLHSKENYDKYSEPRGYPKGER. At phenylalanine 92 the chain carries Phenylalanine amide. Propeptides lie at residues 95–99 and 115–121; these read NVQEE and NMEVSLV. Position 131 is a phenylalanine amide (phenylalanine 131). The propeptide occupies 134–196; that stretch reads TTTAKSVCRM…IDDAELKQEK (63 aa).

The protein belongs to the FARP (FMRFamide related peptide) family. As to expression, specifically expressed in the retina. Detected in the hypothalamus.

Its subcellular location is the secreted. Efficiently inhibits forskolin-induced production of cAMP. Acts as a potent negative regulator of gonadotropin synthesis and secretion. Induces secretion of prolactin. In terms of biological role, efficiently inhibits forskolin-induced production of cAMP. Blocks morphine-induced analgesia. Functionally, shows no inhibitory activity of forskolin-induced production of cAMP. The polypeptide is Pro-FMRFamide-related neuropeptide VF (Homo sapiens (Human)).